We begin with the raw amino-acid sequence, 208 residues long: MTKGILGKKVGMTQIFTEAGELIPVTVVEAAPNVVLQVKTVETDGYNAVQVGFDDLRDVLSNKPAKGHVAKANTAPKRFIREFKNIEGLEVGAEITVDTFEAGDVVDVTGTSKGKGFQGVIKRHGQSRGPMAHGSRYHRRPGSMGPVAPNRVFKNKRLAGRMGGNRVTIQNLEIVQVVPEKNVILIKGNVPGAKKSLITIKSAVKAGK.

The interval 123–147 is disordered; sequence RHGQSRGPMAHGSRYHRRPGSMGPV.

The protein belongs to the universal ribosomal protein uL3 family. In terms of assembly, part of the 50S ribosomal subunit. Forms a cluster with proteins L14 and L19.

In terms of biological role, one of the primary rRNA binding proteins, it binds directly near the 3'-end of the 23S rRNA, where it nucleates assembly of the 50S subunit. In Streptococcus sanguinis (strain SK36), this protein is Large ribosomal subunit protein uL3.